Reading from the N-terminus, the 403-residue chain is Ribosomal RNA large subunit methyltransferase I (403 aa).

A PUA domain is found at 9-88; it reads YPRLVLSKGR…ESIDIAFFTR (80 aa).

The protein belongs to the methyltransferase superfamily. RlmI family.

Its subcellular location is the cytoplasm. The catalysed reaction is cytidine(1962) in 23S rRNA + S-adenosyl-L-methionine = 5-methylcytidine(1962) in 23S rRNA + S-adenosyl-L-homocysteine + H(+). Its function is as follows. Specifically methylates the cytosine at position 1962 (m5C1962) of 23S rRNA. This is Ribosomal RNA large subunit methyltransferase I from Salmonella enteritidis PT4 (strain P125109).